An 81-amino-acid polypeptide reads, in one-letter code: uncharacterized protein (81 aa).

The segment at 1–58 (MPQSKQQFKRQGARQRDSKGKFVKARTGMATAPPAAVSTAAPTASTMTPTGSSTTATI) is disordered. The segment covering 30 to 58 (ATAPPAAVSTAAPTASTMTPTGSSTTATI) has biased composition (low complexity).

This is an uncharacterized protein from Caenorhabditis elegans.